Reading from the N-terminus, the 31-residue chain is SLCDKPHHNCIDGQTCYHTCCQNGLKCVRYP.

4-hydroxyproline is present on residues P6 and P31.

Contains 4 disulfide bonds. In terms of tissue distribution, expressed by the venom duct.

Its subcellular location is the secreted. In Californiconus californicus (California cone), this protein is Conotoxin Cltx-2.